Here is an 83-residue protein sequence, read N- to C-terminus: Prolactin-releasing peptide (83 aa).

The N-terminal stretch at 1 to 21 is a signal peptide; it reads MALKTWLLCLLLLSLVLPGAS. Residue Phe-52 is modified to Phenylalanine amide. The propeptide occupies 57-83; the sequence is ATPRDVTGLGQLSCLPLDGRTKFSQRG.

As to expression, widely expressed, with highest levels in medulla oblongata and hypothalamus.

It localises to the secreted. Stimulates prolactin (PRL) release and regulates the expression of prolactin through its receptor GPR10. May stimulate lactotrophs directly to secrete PRL. This is Prolactin-releasing peptide (Prlh) from Rattus norvegicus (Rat).